We begin with the raw amino-acid sequence, 1415 residues long: DNA-directed RNA polymerase subunit beta' (1415 aa).

Zn(2+)-binding residues include C72, C74, C87, and C90. D463, D465, and D467 together coordinate Mg(2+). Zn(2+)-binding residues include C812, C886, C893, and C896.

The protein belongs to the RNA polymerase beta' chain family. As to quaternary structure, the RNAP catalytic core consists of 2 alpha, 1 beta, 1 beta' and 1 omega subunit. When a sigma factor is associated with the core the holoenzyme is formed, which can initiate transcription. The cofactor is Mg(2+). It depends on Zn(2+) as a cofactor.

The enzyme catalyses RNA(n) + a ribonucleoside 5'-triphosphate = RNA(n+1) + diphosphate. Functionally, DNA-dependent RNA polymerase catalyzes the transcription of DNA into RNA using the four ribonucleoside triphosphates as substrates. The sequence is that of DNA-directed RNA polymerase subunit beta' from Dinoroseobacter shibae (strain DSM 16493 / NCIMB 14021 / DFL 12).